Here is a 525-residue protein sequence, read N- to C-terminus: Signal recognition particle protein (525 aa).

GTP is bound by residues 107-114, 196-200, and 254-257; these read GLQGSGKT, DTAGR, and TKLD. Residues 437–525 are disordered; sequence GMGIPGIGRK…LSKLKFPGKK (89 aa). Positions 447-467 are enriched in basic residues; the sequence is SATRKSKGAKGKSGKKSKKGT. Positions 480 to 497 are enriched in low complexity; the sequence is GVPGMPGLAGLPGGLPDL.

The protein belongs to the GTP-binding SRP family. SRP54 subfamily. Part of the signal recognition particle protein translocation system, which is composed of SRP and FtsY.

Its subcellular location is the cytoplasm. The enzyme catalyses GTP + H2O = GDP + phosphate + H(+). In terms of biological role, involved in targeting and insertion of nascent membrane proteins into the cytoplasmic membrane. Binds to the hydrophobic signal sequence of the ribosome-nascent chain (RNC) as it emerges from the ribosomes. The SRP-RNC complex is then targeted to the cytoplasmic membrane where it interacts with the SRP receptor FtsY. This chain is Signal recognition particle protein, found in Mycobacterium bovis (strain ATCC BAA-935 / AF2122/97).